We begin with the raw amino-acid sequence, 267 residues long: Tryptophan synthase alpha chain (267 aa).

Residues glutamate 49 and aspartate 60 each act as proton acceptor in the active site.

This sequence belongs to the TrpA family. In terms of assembly, tetramer of two alpha and two beta chains.

The enzyme catalyses (1S,2R)-1-C-(indol-3-yl)glycerol 3-phosphate + L-serine = D-glyceraldehyde 3-phosphate + L-tryptophan + H2O. The protein operates within amino-acid biosynthesis; L-tryptophan biosynthesis; L-tryptophan from chorismate: step 5/5. Functionally, the alpha subunit is responsible for the aldol cleavage of indoleglycerol phosphate to indole and glyceraldehyde 3-phosphate. This Cyanothece sp. (strain PCC 7425 / ATCC 29141) protein is Tryptophan synthase alpha chain.